Here is a 320-residue protein sequence, read N- to C-terminus: MIKKIGVLTSGGDAPGMNAAIRGVVRAALTEGLEVFGIYDGYLGLYEDRMVQLDRYSVSDMINRGGTFLGSARFPEFREEHIRAVAIENMKKRGLDALVVIGGDGSYMGAMRLTEMGFPCIGLPGTIDNDIKGTDYTIGFFTALSTVVEAIDRLRDTSSSHQRISVVEVMGRYCGDLTLAAAIAGGCEFIMVPEVEYTRDDLVAEIKAGIAKGKKHAIVAITEHMCDVDELASYIEKETGRETRATVLGHIQRGGSPVPYDRILASRMGAYAIELLLQGHGGRCVGIQNEKLVHHDIIDAIENMKRPFKNDWLDCAKKLY.

Position 12 (Gly12) interacts with ATP. ADP-binding positions include 22–26 (RGVVR) and 55–60 (RYSVSD). ATP contacts are provided by residues 73–74 (RF) and 103–106 (GDGS). Asp104 is a Mg(2+) binding site. 126-128 (TID) contacts substrate. Catalysis depends on Asp128, which acts as the Proton acceptor. Arg155 lines the ADP pocket. Substrate-binding positions include Arg163 and 170–172 (MGR). ADP contacts are provided by residues 186–188 (GCE), Lys212, and 214–216 (KKH). Substrate is bound by residues Glu223, Arg244, and 250–253 (HIQR).

The protein belongs to the phosphofructokinase type A (PFKA) family. ATP-dependent PFK group I subfamily. Prokaryotic clade 'B1' sub-subfamily. As to quaternary structure, homotetramer. It depends on Mg(2+) as a cofactor.

It localises to the cytoplasm. The catalysed reaction is beta-D-fructose 6-phosphate + ATP = beta-D-fructose 1,6-bisphosphate + ADP + H(+). It participates in carbohydrate degradation; glycolysis; D-glyceraldehyde 3-phosphate and glycerone phosphate from D-glucose: step 3/4. Allosterically activated by ADP and other diphosphonucleosides, and allosterically inhibited by phosphoenolpyruvate. Its function is as follows. Catalyzes the phosphorylation of D-fructose 6-phosphate to fructose 1,6-bisphosphate by ATP, the first committing step of glycolysis. The chain is ATP-dependent 6-phosphofructokinase from Klebsiella pneumoniae (strain 342).